Consider the following 505-residue polypeptide: Flagellin (505 aa).

This sequence belongs to the bacterial flagellin family.

It is found in the secreted. The protein resides in the bacterial flagellum. Flagellin is the subunit protein which polymerizes to form the filaments of bacterial flagella. This chain is Flagellin (fliC), found in Salmonella muenchen.